Reading from the N-terminus, the 191-residue chain is Glutathione-dependent formaldehyde-activating enzyme (191 aa).

The 148-residue stretch at 22 to 169 folds into the CENP-V/GFA domain; it reads FAGGTLQCLC…LTELGLTPYD (148 aa). C29, C31, C50, C52, C55, C97, and C100 together coordinate Zn(2+).

It belongs to the Gfa family. The cofactor is Zn(2+).

The enzyme catalyses S-(hydroxymethyl)glutathione = glutathione + formaldehyde. It functions in the pathway one-carbon metabolism; formaldehyde degradation; formate from formaldehyde (glutathione route): step 1/3. Catalyzes the condensation of formaldehyde and glutathione to S-hydroxymethylglutathione. The chain is Glutathione-dependent formaldehyde-activating enzyme from Xanthomonas campestris pv. campestris (strain 8004).